We begin with the raw amino-acid sequence, 959 residues long: E3 ubiquitin-protein ligase NEDD4-like (959 aa).

Residues 10–130 enclose the C2 domain; the sequence is PWHGVCVPVC…TEDPTMERPY (121 aa). 3 disordered regions span residues 183-206, 248-275, and 289-316; these read SNDS…WEEK, AAHR…DVPE, and DSLG…EELS. The 34-residue stretch at 197–230 folds into the WW 1 domain; sequence PPLPPGWEEKVDNLGRTYYVNHNNRTTQWHRPSL. Residue Ser316 is modified to Phosphoserine. Thr322 is subject to Phosphothreonine. Ser346 carries the phosphoserine; by WNK1 and WNK4 modification. The WW 2 domain occupies 369–402; that stretch reads PGLPSGWEERKDAKGRTYYVNHNNRTTTWTRPIM. The tract at residues 408–478 is disordered; sequence GASGSATNSN…YNSPKPQHKV (71 aa). Phosphoserine is present on Ser430. Ser432 carries the post-translational modification Phosphoserine; by SGK1. Residue Ser433 is modified to Phosphoserine; by WNK1 and WNK4. The span at 444-455 shows a compositional bias: basic and acidic residues; it reads GAKDSPVRRAVK. Ser448 carries the phosphoserine; by SGK1 modification. Phosphoserine occurs at positions 459, 463, 467, and 471. WW domains are found at residues 481–514 and 532–565; these read SFLP…DPRL and GPLP…DPRL. One can recognise an HECT domain in the interval 624–958; the sequence is RPDVLKARLW…VENAQGFEGV (335 aa). The active-site Glycyl thioester intermediate is Cys926.

Interacts with UBE2E3. Interacts with NDFIP1; this interaction activates the E3 ubiquitin-protein ligase. Interacts with NDFIP2; this interaction activates the E3 ubiquitin-protein ligase. Interacts (via WW domains) with SCN1A. Interacts (via WW domains) with SCN2A. Interacts (via WW domains) with SCN3A. Interacts (via WW domains) with SCN5A. Interacts (via WW domains) with SCN8A. Interacts (via WW domains) with SCN9A. Interacts (via WW domains) with SCN10A. Interacts (via WW domains) with CLCN5. Interacts with SMAD2. Interacts with SMAD3. Interacts with SMAD6. Interacts with SMAD7. The phosphorylated form interacts with 14-3-3 proteins. Interacts with TNK2. Interacts with WNK1. Interacts with SGK1. Interacts (via C2 domain) with NPC2. Interacts with ARRDC4. Interacts with KCNQ1; promotes internalization of KCNQ1. Interacts (via domains WW1, 3 and 4) with USP36; the interaction inhibits ubiquitination of, at least, NTRK1, KCNQ2 and KCNQ3 by NEDD4L. Interacts with PRRG4 (via cytoplasmic domain). Interacts with LDLRAD3; the interaction is direct. Interacts with TTYH2 and TTYH3. Phosphorylated; which impairs interaction with SCNN. Interaction with YWHAH inhibits dephosphorylation. In terms of processing, auto-ubiquitinated.

It localises to the cytoplasm. The protein localises to the golgi apparatus. The protein resides in the endosome. It is found in the multivesicular body. The enzyme catalyses S-ubiquitinyl-[E2 ubiquitin-conjugating enzyme]-L-cysteine + [acceptor protein]-L-lysine = [E2 ubiquitin-conjugating enzyme]-L-cysteine + N(6)-ubiquitinyl-[acceptor protein]-L-lysine.. It functions in the pathway protein modification; protein ubiquitination. Its activity is regulated as follows. Activated by NDFIP1- and NDFIP2-binding. In terms of biological role, E3 ubiquitin-protein ligase which accepts ubiquitin from an E2 ubiquitin-conjugating enzyme in the form of a thioester and then directly transfers the ubiquitin to targeted substrates. Inhibits TGF-beta signaling by triggering SMAD2 and TGFBR1 ubiquitination and proteasome-dependent degradation. Promotes ubiquitination and internalization of various plasma membrane channels such as ENaC, Nav1.2, Nav1.3, Nav1.5, Nav1.7, Nav1.8, Kv1.3, KCNH2, EAAT1 or CLC5. Promotes ubiquitination and degradation of SGK1 and TNK2. Ubiquitinates BRAT1 and this ubiquitination is enhanced in the presence of NDFIP1. Plays a role in dendrite formation by melanocytes. Involved in the regulation of TOR signaling. Ubiquitinates TTYH2 and TTYH3 and regulates protein levels of TTYH2. In Pongo abelii (Sumatran orangutan), this protein is E3 ubiquitin-protein ligase NEDD4-like (NEDD4L).